A 210-amino-acid polypeptide reads, in one-letter code: Guanylate kinase (210 aa).

The 179-residue stretch at 6–184 (GTLYIISAPS…ALQDLKCIIQ (179 aa)) folds into the Guanylate kinase-like domain. 13–20 (APSGAGKT) contributes to the ATP binding site.

The protein belongs to the guanylate kinase family.

It is found in the cytoplasm. The catalysed reaction is GMP + ATP = GDP + ADP. In terms of biological role, essential for recycling GMP and indirectly, cGMP. This chain is Guanylate kinase, found in Nitrosospira multiformis (strain ATCC 25196 / NCIMB 11849 / C 71).